The chain runs to 1070 residues: Granule associated Rac and RHOG effector protein 1 (1070 aa).

Disordered stretches follow at residues 681–771, 855–992, and 1032–1070; these read EQKA…VGAG, SQAM…STLP, and SYVQ…LPQY. Residues 692 to 702 show a composition bias toward pro residues; the sequence is PSLPVPPPPRA. Composition is skewed to low complexity over residues 719 to 742, 906 to 924, and 951 to 962; these read PQQQ…QPIG, AQGD…NGDS, and TSTLPSPPLLTT. The residue at position 723 (serine 723) is a Phosphoserine. Pro residues predominate over residues 977–992; it reads PKAPWQHPSPLPSTLP. Residues 1046–1058 show a composition bias toward low complexity; the sequence is HKAAPKGFKAFPG.

In terms of assembly, interacts with AGO2 and TNRC6A.

It is found in the cytoplasm. The protein resides in the P-body. In terms of biological role, acts as an effector of RAC1. Associates with CCR4-NOT complex which is one of the major cellular mRNA deadenylases and is linked to various cellular processes including bulk mRNA degradation, miRNA-mediated repression, translational repression during translational initiation and general transcription regulation. May also play a role in miRNA silencing machinery. This Homo sapiens (Human) protein is Granule associated Rac and RHOG effector protein 1.